The primary structure comprises 739 residues: MSSISLIQPDRDLFSWPQYWAACFGPAPFLPMSREEMDQLGWDSCDIILVTGDAYVDHPSFGMAICGRMLEAQGFRVGIIAQPDWSSKDDFMRLGKPNLFFGVTAGNMDSMINRYTADRRLRHDDAYTPDNVAGKRPDRATLVYTQRCKEAWKDVPVILGGIEASLRRTAHYDYWSDTVRRSVLVDSKADMLMFGNGERPLVEVAHRLAMGEPISEIRDVRNTAIIVKEALPGWSGVDSTRLDTPGKIDPIPHPYGEDLPCADNKPVAPKKQEAKAVTVQPPRPKPWEKTYVLLPSFEKVKGDKVLYAHASRILHHETNPGCARALMQKHGDRYVWINPPAIPLSTEEMDSVFALPYKRVPHPAYGNARIPAYEMIRFSVNIMRGCFGGCSFCSITEHEGRIIQSRSEDSIINEIEAIRDTVPGFTGVISDLGGPTANMYMLRCKSPRAEQTCRRLSCVYPDICPHMDTNHEPTINLYRRARDLKGIKKILIASGVRYDIAVEDPRYIKELATHHVGGYLKIAPEHTEEGPLSKMMKPGMGSYDRFKELFDTYSKQAGKEQYLIPYFISAHPGTRDEDMVNLALWLKKHRFRLDQVQNFYPSPLANSTTMYYTGKNPLAKIGYKSEDVFVPKGDKQRRLHKALLRYHDPANWPLIRQALEAMGKKHLIGSRRDCLVPAPTIEEMREARRQNRNTRPALTKHTPMATQRQTPATAKKASSTQSRPVNAGAKKRPKAAVGR.

Residues 372-650 enclose the Radical SAM core domain; that stretch reads AYEMIRFSVN…KALLRYHDPA (279 aa). Residues Cys-386, Cys-390, and Cys-393 each contribute to the [4Fe-4S] cluster site. Residues 685–739 are disordered; it reads REARRQNRNTRPALTKHTPMATQRQTPATAKKASSTQSRPVNAGAKKRPKAAVGR. Positions 704–724 are enriched in polar residues; it reads MATQRQTPATAKKASSTQSRP. Positions 729-739 are enriched in basic residues; that stretch reads AKKRPKAAVGR.

Belongs to the UPF0313 family. [4Fe-4S] cluster serves as cofactor.

The chain is UPF0313 protein YgiQ (ygiQ) from Escherichia coli (strain K12).